A 114-amino-acid polypeptide reads, in one-letter code: uncharacterized protein (114 aa).

An N-terminal signal peptide occupies residues 1–19 (MKASYLVLIFISIFSMAQA). At Ser-41 the chain carries Phosphoserine.

This sequence belongs to the protease inhibitor I9 family.

This is an uncharacterized protein from Saccharomyces cerevisiae (strain ATCC 204508 / S288c) (Baker's yeast).